The chain runs to 834 residues: MALIRCCFEPPELPEFFDSFVQKCTDPSCCCGCCSALRPRYKRLVDNIFPVNPEDGLVKSNMEKLTFYSLSSPDKLDRIGEYLYQKATKDINRKRYKLAEIAMEAMDLLLQACHAQTTLNLFVESFLRMVQKLLEDSNPNLKIMATNSFVKFANINEDTPSYHRRYDFFISKFSSMCHSDAASMRDSLRLAGIKGLQGVIRKTVSDDLVENIWEAEHMEKIVPSLLFNMQFCVNVMFVKKNLLASGDLTPVEDATNVTPPALAEEVLRELVGRASFGHIRSVLKPLLTHLDRHELWVPNTFAIHTFRIVMISIQPQYSYTVVETLMQHLDNNFKSSPKTRTSLAVVLSKIIAIAAGESVGPSALDIINNLLTHLRTSVSTTSEITPEESQYQEALINALGEFANHHPDYQKIEIMLFIMNTVPDLSKKSKGDQMLQNILLKSLLKVGTQYSTVSFEKAFPASFLQPLLKMARAPHNPTRMVVMQILQALLDRHQNEQVLSSVSVKPYPALSQEPPSRSDIIFTHKYGANIMQALIDSMALSDRVDALTSSFNTAALLIVEMSCNETVQEFLLFILGIQQVACTVDTLGNVHKCSLHAISIGLLVLISRVSGINNLLEYAQKIVDARREEASHFLPPLLEPKKLAGKTFNLQLPHLAIDKLALGECLQNAGMDAQRLNTGAPYSLNQTDHPGHRHSWVESVSNQLTQRNSSADLTVYNGDVDSVSSSPGVCKKLLAPEFNFDAMKRALAEPTEAAKREQRERQMQIVRTFREGEFDDLMRRTEPKHDLIQNRLNELFNSLAVERQITQSDTKSSQLQASNEKPIYETNFPELFYY.

An HEAT repeat occupies 120 to 156 (NLFVESFLRMVQKLLEDSNPNLKIMATNSFVKFANIN). A helical transmembrane segment spans residues 595-612 (LHAISIGLLVLISRVSGI).

This sequence belongs to the EFR3 family. As to expression, expression during embryogenesis is ubiquitous with notably higher levels in the CNS and brain.

It localises to the membrane. Its function is as follows. An essential gene required for embryogenesis; required for cell viability. The protein is Protein EFR3 homolog cmp44E (stmA) of Drosophila melanogaster (Fruit fly).